Here is a 424-residue protein sequence, read N- to C-terminus: Neurotensin receptor type 1 (424 aa).

The disordered stretch occupies residues 1-23; sequence MHLNSSVPQGTPGEPDAQPFSGP. Residues 1–68 lie on the Extracellular side of the membrane; it reads MHLNSSVPQG…TDIYSKVLVT (68 aa). N-linked (GlcNAc...) asparagine glycans are attached at residues N4, N38, and N42. Residues 69–89 traverse the membrane as a helical segment; the sequence is AIYLALFVVGTVGNSVTAFTL. Over 90 to 103 the chain is Cytoplasmic; that stretch reads ARKKSLQSLQSTVH. Residues 104-123 form a helical membrane-spanning segment; sequence YHLGSLALSDLLILLLAMPV. Residues 124–143 lie on the Extracellular side of the membrane; the sequence is ELYNFIWVHHPWAFGDAGCR. An intrachain disulfide couples C142 to C225. The helical transmembrane segment at 144 to 165 threads the bilayer; the sequence is GYYFLRDACTYATALNVASLSV. Over 166-185 the chain is Cytoplasmic; the sequence is ERYLAICHPFKAKTLMSRSR. A helical transmembrane segment spans residues 186–206; the sequence is TKKFISAIWLASALLAIPMLF. Over 207–235 the chain is Extracellular; it reads TMGLQNRSGDGTHPGGLVCTPIVDTATVK. The helical transmembrane segment at 236 to 260 threads the bilayer; the sequence is VVIQVNTFMSFLFPMLVISILNTVI. Over 261–308 the chain is Cytoplasmic; the sequence is ANKLTVMVHQAAEQGRVCTVGTHNGLEHSTFNMTIEPGRVQALRHGVL. The helical transmembrane segment at 309–330 threads the bilayer; it reads VLRAVVIAFVVCWLPYHVRRLM. Residues 326 to 349 are neurotensin binding; the sequence is VRRLMFCYISDEQWTTFLFDFYHY. The Extracellular portion of the chain corresponds to 331–348; that stretch reads FCYISDEQWTTFLFDFYH. A helical membrane pass occupies residues 349-369; sequence YFYMLTNALFYVSSAINPILY. Residues 370–424 lie on the Cytoplasmic side of the membrane; that stretch reads NLVSANFRQVFLSTLACLCPGWRHRRKKRPTFSRKPNSMSSNHAFSTSATRETLY. 2 S-palmitoyl cysteine lipidation sites follow: C386 and C388. Residues 397–424 form a disordered region; it reads KRPTFSRKPNSMSSNHAFSTSATRETLY. A compositionally biased stretch (polar residues) spans 403–424; it reads RKPNSMSSNHAFSTSATRETLY.

This sequence belongs to the G-protein coupled receptor 1 family. Neurotensin receptor subfamily. NTSR1 sub-subfamily. Interacts (palmitoylated form) with GNA11. Post-translationally, N-glycosylated. In terms of processing, palmitoylated; this is required for normal localization at membrane rafts and normal GNA11-mediated activation of down-stream signaling cascades. The palmitoylation level increases in response to neurotensin treatment. Detected in brain and small intestine.

It localises to the cell membrane. The protein localises to the membrane raft. In terms of biological role, G-protein coupled receptor for the tridecapeptide neurotensin (NTS). Signaling is effected via G proteins that activate a phosphatidylinositol-calcium second messenger system. Signaling leads to the activation of downstream MAP kinases and protects cells against apoptosis. The chain is Neurotensin receptor type 1 (Ntsr1) from Rattus norvegicus (Rat).